A 199-amino-acid chain; its full sequence is Nuclear transcription factor Y subunit C-2 (199 aa).

Belongs to the NFYC/HAP5 subunit family. As to quaternary structure, heterotrimeric transcription factor composed of three components, NF-YA, NF-YB and NF-YC. NF-YB and NF-YC must interact and dimerize for NF-YA association and DNA binding. Interacts with HTT1 in both cytoplasm and nucleus. As to expression, ubiquitous.

The protein resides in the nucleus. The protein localises to the cytoplasm. Its function is as follows. Stimulates the transcription of various genes by recognizing and binding to a CCAAT motif in promoters. This Arabidopsis thaliana (Mouse-ear cress) protein is Nuclear transcription factor Y subunit C-2 (NFYC2).